The chain runs to 468 residues: ATP synthase subunit beta (468 aa).

An ATP-binding site is contributed by Gly155–Thr162.

The protein belongs to the ATPase alpha/beta chains family. In terms of assembly, F-type ATPases have 2 components, CF(1) - the catalytic core - and CF(0) - the membrane proton channel. CF(1) has five subunits: alpha(3), beta(3), gamma(1), delta(1), epsilon(1). CF(0) has three main subunits: a(1), b(2) and c(9-12). The alpha and beta chains form an alternating ring which encloses part of the gamma chain. CF(1) is attached to CF(0) by a central stalk formed by the gamma and epsilon chains, while a peripheral stalk is formed by the delta and b chains.

It localises to the cell membrane. It catalyses the reaction ATP + H2O + 4 H(+)(in) = ADP + phosphate + 5 H(+)(out). Functionally, produces ATP from ADP in the presence of a proton gradient across the membrane. The catalytic sites are hosted primarily by the beta subunits. The sequence is that of ATP synthase subunit beta from Streptococcus suis (strain 98HAH33).